The following is a 219-amino-acid chain: Sugar transporter SWEET1 (219 aa).

The next 7 helical transmembrane spans lie at 3–23, 38–58, 63–83, 98–118, 125–145, 156–176, and 189–209; these read FLQL…TTGL, VQFL…YYGL, GTVI…IATY, LLMV…ISPG, LGLT…ADLL, LSFS…LYGL, and PGIF…AVIP. One can recognise a MtN3/slv 1 domain in the interval 5–90; it reads QLLSCACIIF…ATYCHYTKEK (86 aa). A MtN3/slv 2 domain is found at 124–204; it reads QLGLTCSVFT…LIRFFLFWWF (81 aa).

The protein belongs to the SWEET sugar transporter family.

The protein resides in the golgi apparatus membrane. The protein localises to the cell membrane. In terms of biological role, mediates sugar transport across membranes. The polypeptide is Sugar transporter SWEET1 (slc50a1) (Danio rerio (Zebrafish)).